The chain runs to 546 residues: Pyridine nucleotide-disulfide oxidoreductase domain-containing protein 1 (546 aa).

Belongs to the class-I pyridine nucleotide-disulfide oxidoreductase family. PYROXD1 subfamily. The cofactor is FAD.

The sequence is that of Pyridine nucleotide-disulfide oxidoreductase domain-containing protein 1 (pyroxd1) from Dictyostelium discoideum (Social amoeba).